We begin with the raw amino-acid sequence, 768 residues long: Cullin-3 (768 aa).

Serine 2 carries the post-translational modification N-acetylserine. An interaction with KLHL18 region spans residues 2–41; the sequence is SNLSKGTGSRKDTKMRIRAFPMTMDEKYVNSIWDLLKNAI. A Phosphoserine modification is found at serine 585. Positions 677 to 698 are disordered; the sequence is VAAKQGESDPERKETRQKVDDD. Positions 682-698 are enriched in basic and acidic residues; that stretch reads GESDPERKETRQKVDDD. Residues 698–760 enclose the Cullin neddylation domain; the sequence is DRKHEIEAAI…REYLARTPED (63 aa). Residue lysine 712 forms a Glycyl lysine isopeptide (Lys-Gly) (interchain with G-Cter in NEDD8) linkage.

The protein belongs to the cullin family. Forms neddylation-dependent homodimers. Component of multiple BCR (BTB-CUL3-RBX1) E3 ubiquitin-protein ligase complexes formed of CUL3, RBX1 and a variable BTB domain-containing protein acting as both, adapter to cullin and substrate recognition subunit. The BCR complex may be active as a heterodimeric complex, in which NEDD8, covalently attached to one CUL3 molecule, binds to the C-terminus of a second CUL3 molecule. Interacts with RBX1, RNF7 and TIP120A/CAND1. Part of the BCR(SPOP) containing SPOP, and of BCR containing homodimeric SPOPL or the heterodimer formed by SPOP and SPOPL. Part of the probable BCR(KLHL9-KLHL13) complex with BTB domain proteins KLHL9 and KLHL13. Part of the BCR(KLHL41) complex containing KLHL41. Component of the BCR(KLHL12) E3 ubiquitin ligase complex, at least composed of CUL3 and KLHL12 and RBX1. Component of the BCR(KLHL3) E3 ubiquitin ligase complex, at least composed of CUL3 and KLHL3 and RBX1. Part of the BCR(ENC1) complex containing ENC1. Part of a complex consisting of BMI1/PCGF4, CUL3 and SPOP. Part of a complex consisting of BRMS1, CUL3 and SPOP. Component of the BCR(KLHL21) E3 ubiquitin ligase complex, at least composed of CUL3, KLHL21 and RBX1. Component of the BCR(KLHL22) E3 ubiquitin ligase complex, at least composed of CUL3, KLHL22 and RBX1. Component of the BCR(KLHL25) E3 ubiquitin ligase complex, at least composed of CUL3, KLHL25 and RBX1. Part of a complex consisting of MACROH2A1, CUL3 and SPOP. Component of the BCR(KLHL42) E3 ubiquitin ligase complex, at least composed of CUL3 and KLHL42. Component of the BCR(KBTBD8) E3 ubiquitin ligase complex, at least composed of CUL3, KBTBD8 and RBX1. Interacts with KLHL42 (via the BTB domain). Interacts with KATNA1; the interaction is enhanced by KLHL42. Interacts with KCTD5, KLHL9, KLHL11, KLHL13, GAN, ZBTB16, KLHL3, KLHL15, KLHL20, KLHL36, GMCL2, BTBD1. Part of a complex that contains CUL3, RBX1 and GAN. Interacts (via BTB domain) with KLHL17; the interaction regulates surface GRIK2 expression. Interacts with KCTD7. Part of the BCR(GAN) complex containing GAN. Part of the BCR(KEAP1) complex containing KEAP1. Interacts with KAT5 and ATF2. Interacts with KCTD17 in the BCR(KCTD17) E3 ubiquitin ligase complex, at least composed of CUL3, KCTD17 and RBX1. Interacts (when neddylated) with ARIH1; leading to activate the E3 ligase activity of ARIH1. Interacts with COPS9. Interacts with PPP2R5B; this interaction is indirect and mediated through KLHL15-binding and leads to PPP2R5B proteasomal degradation. Interacts with RBBP8/CtIP; this interaction is indirect and mediated through KLHL15-binding and leads to RBBP8 proteasomal degradation. Interacts with KLHL24 in the BCR(KLHL24) E3 ubiquitin ligase complex, composed of CUL3, RBX1 and KLHL24. Interacts with RHOBTB2. Interacts with CYCE. Interacts with KLHL10. Interacts with AURKA and KLHL18 (via BTB domain). Interacts (unneddylated form) with DCUN1D1, DCUN1D2, DCUN1D3, DCUN1D4 and DCUN1D5; these interactions promote the cullin neddylation. Component of a BCR3 (BTB-CUL3-RBX1) E3 ubiquitin ligase complex, also named Cul3-RING ubiquitin ligase complex CUL3(KBTBD6/7), composed of CUL3, RBX1, KBTBD6 and KBTBD7. Component of the BCR(KBTBD2) E3 ubiquitin ligase complex, at least composed of CUL3, KBTBD2 and RBX1. Interacts with KBTBD2 (via the BTB domain). Component of the BCR(KBTBD4) E3 ubiquitin ligase complex, at least composed of CUL3, KBTBD4 and RBX1. Post-translationally, neddylated. Attachment of NEDD8 is required for the E3 ubiquitin-protein ligase activity of the BCR complex. Deneddylated via its interaction with the COP9 signalosome (CSN) complex. In terms of tissue distribution, widely expressed, with highest expression in brain, spleen and testis. In the testis, it is mainly expressed in spermatids.

Its subcellular location is the nucleus. The protein resides in the golgi apparatus. It is found in the cell projection. The protein localises to the cilium. It localises to the flagellum. Its subcellular location is the cytoplasm. The protein resides in the cytoskeleton. It is found in the spindle. The protein localises to the microtubule organizing center. It localises to the centrosome. Its subcellular location is the spindle pole. It functions in the pathway protein modification; protein ubiquitination. Functionally, core component of multiple cullin-RING-based BCR (BTB-CUL3-RBX1) E3 ubiquitin-protein ligase complexes which mediate the ubiquitination and subsequent proteasomal degradation of target proteins. BCR complexes and ARIH1 collaborate in tandem to mediate ubiquitination of target proteins. As a scaffold protein may contribute to catalysis through positioning of the substrate and the ubiquitin-conjugating enzyme. The E3 ubiquitin-protein ligase activity of the complex is dependent on the neddylation of the cullin subunit and is inhibited by the association of the deneddylated cullin subunit with TIP120A/CAND1. The functional specificity of the BCR complex depends on the BTB domain-containing protein as the substrate recognition component. BCR(KLHL42) is involved in ubiquitination of KATNA1. BCR(SPOP) is involved in ubiquitination of BMI1/PCGF4, BRMS1, MACROH2A1 and DAXX, GLI2 and GLI3. Can also form a cullin-RING-based BCR (BTB-CUL3-RBX1) E3 ubiquitin-protein ligase complex containing homodimeric SPOPL or the heterodimer formed by SPOP and SPOPL; these complexes have lower ubiquitin ligase activity. BCR(KLHL9-KLHL13) controls the dynamic behavior of AURKB on mitotic chromosomes and thereby coordinates faithful mitotic progression and completion of cytokinesis. BCR(KLHL12) is involved in ER-Golgi transport by regulating the size of COPII coats, thereby playing a key role in collagen export, which is required for embryonic stem (ES) cells division: BCR(KLHL12) acts by mediating monoubiquitination of SEC31 (SEC31A or SEC31B). BCR(KLHL3) acts as a regulator of ion transport in the distal nephron; by mediating ubiquitination of WNK4. The BCR(KLHL20) E3 ubiquitin ligase complex is involved in interferon response and anterograde Golgi to endosome transport: it mediates both ubiquitination leading to degradation and 'Lys-33'-linked ubiquitination. The BCR(KLHL21) E3 ubiquitin ligase complex regulates localization of the chromosomal passenger complex (CPC) from chromosomes to the spindle midzone in anaphase and mediates the ubiquitination of AURKB. The BCR(KLHL22) ubiquitin ligase complex mediates monoubiquitination of PLK1, leading to PLK1 dissociation from phosphoreceptor proteins and subsequent removal from kinetochores, allowing silencing of the spindle assembly checkpoint (SAC) and chromosome segregation. The BCR(KLHL22) ubiquitin ligase complex is also responsible for the amino acid-stimulated 'Lys-48' polyubiquitination and proteasomal degradation of DEPDC5. Through the degradation of DEPDC5, releases the GATOR1 complex-mediated inhibition of the TORC1 pathway. The BCR(KLHL25) ubiquitin ligase complex is involved in translational homeostasis by mediating ubiquitination and subsequent degradation of hypophosphorylated EIF4EBP1 (4E-BP1). The BCR(KLHL25) ubiquitin ligase complex is also involved in lipid synthesis by mediating ubiquitination and degradation of ACLY. The BCR(KBTBD8) complex acts by mediating monoubiquitination of NOLC1 and TCOF1, leading to remodel the translational program of differentiating cells in favor of neural crest specification. Involved in ubiquitination of cyclin E and of cyclin D1 (in vitro) thus involved in regulation of G1/S transition. Involved in the ubiquitination of KEAP1, ENC1 and KLHL41. In concert with ATF2 and RBX1, promotes degradation of KAT5 thereby attenuating its ability to acetylate and activate ATM. The BCR(KCTD17) E3 ubiquitin ligase complex mediates ubiquitination and degradation of TCHP, a down-regulator of cilium assembly, thereby inducing ciliogenesis. The BCR(KLHL24) E3 ubiquitin ligase complex mediates ubiquitination of KRT14, controls KRT14 levels during keratinocytes differentiation, and is essential for skin integrity. The BCR(KLHL18) E3 ubiquitin ligase complex mediates the ubiquitination of AURKA leading to its activation at the centrosome which is required for initiating mitotic entry. The BCR(KEAP1) E3 ubiquitin ligase complex acts as a key sensor of oxidative and electrophilic stress by mediating ubiquitination and degradation of NFE2L2/NRF2, a transcription factor regulating expression of many cytoprotective genes. As part of the CUL3(KBTBD6/7) E3 ubiquitin ligase complex functions mediates 'Lys-48' ubiquitination and proteasomal degradation of TIAM1. By controlling the ubiquitination of that RAC1 guanine exchange factors (GEF), regulates RAC1 signal transduction and downstream biological processes including the organization of the cytoskeleton, cell migration and cell proliferation. The BCR(KBTBD4) E3 ubiquitin ligase complex targets CoREST corepressor complex components RCOR1, KDM1A/LSD1 and HDAC2 for proteasomal degradation with RCOR1 likely to be the primary target while degradation of KDM1A and HDAC2 is likely due to their association with RCOR1. It also targets RCOR3, MIER2 and MIER3 for proteasomal degradation as well as associated proteins ZNF217 and RREB1 with degradation being dependent on the presence of an ELM2 domain in the target proteins. The BCR(ARMC5) complex mediates premature transcription termination of transcripts that are unfavorably configured for transcriptional elongation by mediating ubiquitination of Pol II subunit POLR2A. Required for 'Lys-63'-linked ubiquitination of large ribosomal subunit protein MRPL12. This is Cullin-3 (Cul3) from Mus musculus (Mouse).